Reading from the N-terminus, the 324-residue chain is Elongation factor Ts, mitochondrial (324 aa).

The N-terminal 44 residues, 1-44, are a transit peptide targeting the mitochondrion; sequence MSLLRSLRFFPVACTGRSARAVLLQPSQPWLTFHAGPSLSSAAS. An N6-succinyllysine mark is found at K75, K132, and K191. Position 269 is a phosphoserine (S269).

The protein belongs to the EF-Ts family.

It localises to the mitochondrion. Its function is as follows. Associates with the EF-Tu.GDP complex and induces the exchange of GDP to GTP. It remains bound to the aminoacyl-tRNA.EF-Tu.GTP complex up to the GTP hydrolysis stage on the ribosome. The chain is Elongation factor Ts, mitochondrial (Tsfm) from Mus musculus (Mouse).